The sequence spans 116 residues: NADH-quinone oxidoreductase subunit A (116 aa).

3 helical membrane passes run 3–23, 61–81, and 88–108; these read FTFLVVVLLTALAFVGVVIAL, FAILFLMFDVETAFLFPWAVV, and QGLVSILFFFIILVLGLAYAW.

The protein belongs to the complex I subunit 3 family. In terms of assembly, NDH-1 is composed of 14 different subunits. Subunits NuoA, H, J, K, L, M, N constitute the membrane sector of the complex.

It localises to the cell inner membrane. It catalyses the reaction a quinone + NADH + 5 H(+)(in) = a quinol + NAD(+) + 4 H(+)(out). Functionally, NDH-1 shuttles electrons from NADH, via FMN and iron-sulfur (Fe-S) centers, to quinones in the respiratory chain. The immediate electron acceptor for the enzyme in this species is believed to be a menaquinone. Couples the redox reaction to proton translocation (for every two electrons transferred, four hydrogen ions are translocated across the cytoplasmic membrane), and thus conserves the redox energy in a proton gradient. This chain is NADH-quinone oxidoreductase subunit A, found in Bacteroides thetaiotaomicron (strain ATCC 29148 / DSM 2079 / JCM 5827 / CCUG 10774 / NCTC 10582 / VPI-5482 / E50).